Reading from the N-terminus, the 657-residue chain is Glycogen debranching enzyme (657 aa).

The active-site Nucleophile is Asp-336. Residue Glu-371 is the Proton donor of the active site. The disordered stretch occupies residues 460–479 (ANGEENRDGTNNNYSNNHGK).

Belongs to the glycosyl hydrolase 13 family.

It carries out the reaction Hydrolysis of (1-&gt;6)-alpha-D-glucosidic linkages to branches with degrees of polymerization of three or four glucose residues in limit dextrin.. It functions in the pathway glycan degradation; glycogen degradation. Functionally, removes maltotriose and maltotetraose chains that are attached by 1,6-alpha-linkage to the limit dextrin main chain, generating a debranched limit dextrin. The protein is Glycogen debranching enzyme of Escherichia coli (strain UTI89 / UPEC).